The following is a 299-amino-acid chain: Regucalcin (299 aa).

An a divalent metal cation-binding site is contributed by Glu18. Arg101, Asn103, and Glu121 together coordinate substrate. A divalent metal cation is bound by residues Asn154 and Asp204. Asp204 acts as the Proton donor/acceptor in catalysis.

This sequence belongs to the SMP-30/CGR1 family. Requires Zn(2+) as cofactor. Mn(2+) is required as a cofactor. It depends on Ca(2+) as a cofactor. The cofactor is Mg(2+). As to expression, expressed in the liver, and in the pronephros from the late tadpole stage.

It is found in the cytoplasm. It carries out the reaction D-glucono-1,5-lactone + H2O = D-gluconate + H(+). The protein operates within cofactor biosynthesis; L-ascorbate biosynthesis via UDP-alpha-D-glucuronate pathway; L-ascorbate from UDP-alpha-D-glucuronate: step 3/4. Gluconolactonase with low activity towards other sugar lactones, including gulonolactone and galactonolactone. Catalyzes a key step in ascorbic acid (vitamin C) biosynthesis. Can also hydrolyze diisopropyl phosphorofluoridate and phenylacetate (in vitro). Calcium-binding protein. Modulates Ca(2+) signaling, and Ca(2+)-dependent cellular processes and enzyme activities. This Xenopus laevis (African clawed frog) protein is Regucalcin.